The chain runs to 434 residues: Alpha-enolase (434 aa).

An N-acetylserine modification is found at Ser-2. An N6-acetyllysine modification is found at Lys-5. At Ser-27 the chain carries Phosphoserine. Ser-40 serves as a coordination point for Mg(2+). Tyr-44 carries the phosphotyrosine modification. Lys-60 bears the N6-acetyllysine; alternate mark. Lys-60 is subject to N6-succinyllysine; alternate. N6-acetyllysine is present on residues Lys-64 and Lys-71. Lys-89 carries the N6-acetyllysine; alternate modification. Lys-89 is subject to N6-succinyllysine; alternate. An N6-acetyllysine mark is found at Lys-92 and Lys-126. 2 residues coordinate substrate: His-158 and Glu-167. N6-acetyllysine is present on residues Lys-193 and Lys-199. An N6-acetyllysine; alternate modification is found at Lys-202. Residue Lys-202 forms a Glycyl lysine isopeptide (Lys-Gly) (interchain with G-Cter in SUMO2); alternate linkage. Glu-210 serves as the catalytic Proton donor. Residues Lys-228 and Lys-233 each carry the N6-acetyllysine; alternate modification. Lys-228 is modified (N6-succinyllysine; alternate). Lys-228 is modified (N6-(2-hydroxyisobutyryl)lysine; alternate). Position 233 is an N6-malonyllysine; alternate (Lys-233). Asp-245 contributes to the Mg(2+) binding site. Ser-254 is subject to Phosphoserine. N6-acetyllysine is present on Lys-256. A phosphoserine mark is found at Ser-263 and Ser-272. Lys-281 bears the N6-acetyllysine; alternate mark. Residue Lys-281 is modified to N6-(2-hydroxyisobutyryl)lysine; alternate. At Lys-285 the chain carries N6-acetyllysine. Tyr-287 is modified (phosphotyrosine). A Phosphoserine modification is found at Ser-291. Positions 293 and 318 each coordinate Mg(2+). Residues Glu-293 and Asp-318 each contribute to the substrate site. Lys-335 and Lys-343 each carry N6-acetyllysine. Lys-343 functions as the Proton acceptor in the catalytic mechanism. Residues 370 to 373 (SHRS) and Lys-394 contribute to the substrate site. Residues 405–434 (AKYNQLLRIEEELGSKAKFAGRNFRNPLAK) are required for interaction with PLG. The residue at position 406 (Lys-406) is an N6-acetyllysine. An N6-acetyllysine; alternate modification is found at Lys-420. Lys-420 is subject to N6-succinyllysine; alternate. An N6-malonyllysine; alternate modification is found at Lys-420.

It belongs to the enolase family. As to quaternary structure, mammalian enolase is composed of 3 isozyme subunits, alpha, beta and gamma, which can form homodimers or heterodimers which are cell-type and development-specific. ENO1 interacts with PLG in the neuronal plasma membrane and promotes its activation. The C-terminal lysine is required for this binding. Interacts with ENO4 and PGAM2. Interacts with CMTM6. Mg(2+) serves as cofactor. In terms of processing, ISGylated. Lysine 2-hydroxyisobutyrylation (Khib) by p300/EP300 activates the phosphopyruvate hydratase activity.

Its subcellular location is the cytoplasm. The protein localises to the cell membrane. It carries out the reaction (2R)-2-phosphoglycerate = phosphoenolpyruvate + H2O. The protein operates within carbohydrate degradation; glycolysis; pyruvate from D-glyceraldehyde 3-phosphate: step 4/5. Its function is as follows. Glycolytic enzyme the catalyzes the conversion of 2-phosphoglycerate to phosphoenolpyruvate. In addition to glycolysis, involved in various processes such as growth control, hypoxia tolerance and allergic responses. May also function in the intravascular and pericellular fibrinolytic system due to its ability to serve as a receptor and activator of plasminogen on the cell surface of several cell-types such as leukocytes and neurons. Stimulates immunoglobulin production. The chain is Alpha-enolase (ENO1) from Pongo abelii (Sumatran orangutan).